We begin with the raw amino-acid sequence, 130 residues long: Protein ApaG (130 aa).

In terms of domain architecture, ApaG spans 3-127 (RATTRKIQVT…FSLDVPHMAR (125 aa)).

The chain is Protein ApaG from Azorhizobium caulinodans (strain ATCC 43989 / DSM 5975 / JCM 20966 / LMG 6465 / NBRC 14845 / NCIMB 13405 / ORS 571).